Reading from the N-terminus, the 293-residue chain is Bisanhydrobacterioruberin hydratase (293 aa).

7 helical membrane-spanning segments follow: residues 36 to 56, 66 to 86, 89 to 109, 134 to 154, 171 to 191, 199 to 219, and 254 to 274; these read IAVVFPLVGAVTLLASAEGLL, FVLFGTFVMRLPLVAGIFPLV, RAGLALVALTLYSYGIELVGV, FGLPVFFFPLVLNAYLLVLLL, ATVMLVDLVLDPGAVAIGFWI, GVPWQNYAGWLLSGSVAVLLF, and LFYTNWVPFGLAALLGAGLLW.

The protein belongs to the BABR hydratase family.

Its subcellular location is the membrane. The enzyme catalyses bacterioruberin = bisanhydrobacterioruberin + 2 H2O. Its pathway is carotenoid biosynthesis. Involved in the biosynthesis of the acyclic C50 carotenoid bacterioruberin (BR). Catalyzes the reaction that introduces hydroxyl groups to C3'' and C3''' of bisanhydrobacterioruberin (BABR) to generate BR. The sequence is that of Bisanhydrobacterioruberin hydratase from Haloarcula japonica (strain ATCC 49778 / DSM 6131 / JCM 7785 / NBRC 101032 / NCIMB 13157 / TR-1).